The primary structure comprises 346 residues: tRNA N6-adenosine threonylcarbamoyltransferase (346 aa).

Fe cation is bound by residues His-111 and His-115. Residues 134–138 (LVSGG), Asp-167, Gly-180, and Asn-279 contribute to the substrate site. Position 307 (Asp-307) interacts with Fe cation.

This sequence belongs to the KAE1 / TsaD family. Fe(2+) serves as cofactor.

It localises to the cytoplasm. It carries out the reaction L-threonylcarbamoyladenylate + adenosine(37) in tRNA = N(6)-L-threonylcarbamoyladenosine(37) in tRNA + AMP + H(+). Functionally, required for the formation of a threonylcarbamoyl group on adenosine at position 37 (t(6)A37) in tRNAs that read codons beginning with adenine. Is involved in the transfer of the threonylcarbamoyl moiety of threonylcarbamoyl-AMP (TC-AMP) to the N6 group of A37, together with TsaE and TsaB. TsaD likely plays a direct catalytic role in this reaction. The chain is tRNA N6-adenosine threonylcarbamoyltransferase from Burkholderia mallei (strain ATCC 23344).